The chain runs to 612 residues: Proton channel OTOP1 (612 aa).

Over residues methionine 1 to arginine 46 the composition is skewed to low complexity. Residues methionine 1 to arginine 50 form a disordered region. Residues methionine 1 to alanine 58 lie on the Cytoplasmic side of the membrane. Residues glutamate 59–tryptophan 80 traverse the membrane as a helical segment. Topologically, residues alanine 81–serine 88 are extracellular. A helical transmembrane segment spans residues lysine 89–glycine 112. Residues arginine 113–alanine 130 are Cytoplasmic-facing. A helical transmembrane segment spans residues glycine 131–glycine 153. Topologically, residues tyrosine 154–serine 163 are extracellular. A helical transmembrane segment spans residues alanine 164 to alanine 188. The Cytoplasmic segment spans residues lysine 189–lysine 196. Residues threonine 197–lysine 223 traverse the membrane as a helical segment. Over histidine 224–serine 264 the chain is Extracellular. The helical transmembrane segment at histidine 265 to lysine 290 threads the bilayer. Topologically, residues asparagine 291–valine 311 are cytoplasmic. The helical transmembrane segment at methionine 312 to isoleucine 334 threads the bilayer. The Extracellular portion of the chain corresponds to histidine 335–glutamate 344. Residues serine 345–arginine 370 traverse the membrane as a helical segment. The Cytoplasmic segment spans residues isoleucine 371–lysine 388. Residues leucine 389 to leucine 413 traverse the membrane as a helical segment. Topologically, residues cysteine 414–tryptophan 423 are extracellular. Residues tyrosine 424–phenylalanine 444 traverse the membrane as a helical segment. The Cytoplasmic portion of the chain corresponds to glutamate 445–arginine 544. The tract at residues alanine 499 to proline 525 is disordered. Residues arginine 506–glutamate 518 are compositionally biased toward basic and acidic residues. A helical transmembrane segment spans residues asparagine 545–phenylalanine 563. Topologically, residues glycine 564 to glutamate 581 are extracellular. A helical membrane pass occupies residues proline 582–leucine 605. Residues phenylalanine 606–isoleucine 612 lie on the Cytoplasmic side of the membrane.

It belongs to the otopetrin family. As to quaternary structure, homodimer. Interacts with STAT1, independently of STAT1 phosphorylation status.

It is found in the cell membrane. The protein localises to the cell projection. It localises to the microvillus. It carries out the reaction H(+)(in) = H(+)(out). Activated by both acid and alkali, with proton influx in response to extracellular acid and proton efflux during alkali stimulation. Inhibited by Zn(2+); this inhibition is thought to be pH-sensitive. Currents evoked in response to mild acid (pH 6.0) stimulus may also be mildly potentiated by exposure to Zn(2+). Activated by NH(4)Cl. Functionally, proton-selective ion channel. Biphasically modulated by acid and alkali, mediating proton influx and efflux in response to extracellular acid and base stimulation, respectively. Sour taste receptor, which carries inward currents in response to extracellular acidification. Sensor for ammonium chloride (NH(4)Cl) in taste receptor cells. NH(4)Cl acts by increasing the intracellular pH, thereby generating a driving force for proton entry through OTOP1 channel. Might also participate in alkaline sensation. Plays a role in the regulation of Ca(2+) flux in response to purigenic (ATP, ADP and UDP) stimuli, leading to increase in cytosolic Ca(2+) due to influx of extracellular calcium. May play this role by inhibiting P2Y purinoceptor-mediated Ca(2+) release in a Ca(2+)-dependent manner and promote an influx of Ca(2+) in response to ATP. Through this mechanism and possibly others, plays a role in the formation and function of calcium carbonate-based structures in the vestibular system of the inner ear, called otoconia, that sense gravity and linear acceleration. In obesity, may attenuate adipose tissue inflammation, through the negative regulation of IFNG signaling, hence may play an adaptive role in the maintainance of metabolic homeostasis. Following alkali activation, may also be permeable Na(+), K(+), Cs(+) and Li(+). This is Proton channel OTOP1 from Homo sapiens (Human).